A 329-amino-acid polypeptide reads, in one-letter code: Beta-tectorin (329 aa).

Positions 1-17 (MVAVTVYLMVILAQAFA) are cleaved as a signal peptide. A ZP domain is found at 19–287 (PCTPNKADVI…VTCDKRKQRM (269 aa)). Asn80, Asn104, Asn116, and Asn145 each carry an N-linked (GlcNAc...) asparagine glycan. A disulfide bridge links Cys204 with Cys264. Gly304 is lipidated: GPI-anchor amidated glycine. A propeptide spans 305 to 329 (LSRFYMLSDVIFHLLFAIGFCAILL) (removed in mature form).

As to quaternary structure, may form homomeric filament after self-association or heteromeric filament after association with alpha-tectorin. In terms of processing, the N-terminus is blocked. Post-translationally, N-glycosylated. The presence of a hydrophobic C-terminus preceded by a potential cleavage site strongly suggests that tectorins are synthesized as glycosylphosphatidylinositol-linked, membrane-bound precursors. Tectorins are targeted to the apical surface of the inner ear epithelia by the lipid and proteolytically released into the extracellular compartment. Exclusively expressed in the inner ear, where it is found in basilar papilla, clear cells, supporting cells, cuboidal cells and the lagena macula.

The protein resides in the cell membrane. Its subcellular location is the secreted. It localises to the extracellular space. It is found in the extracellular matrix. Functionally, one of the major non-collagenous components of the tectorial membrane. The tectorial membrane is an extracellular matrix of the inner ear that covers the neuroepithelium of the cochlea and contacts the stereocilia bundles of specialized sensory hair cells. Sound induces movement of these hair cells relative to the tectorial membrane, deflects the stereocilia and leads to fluctuations in hair-cell membrane potential, transducing sound into electrical signals. This Gallus gallus (Chicken) protein is Beta-tectorin (TECTB).